A 578-amino-acid chain; its full sequence is Arginine--tRNA ligase (578 aa).

The 'HIGH' region signature appears at 123-133 (PNLAKEMHVGH).

Belongs to the class-I aminoacyl-tRNA synthetase family. As to quaternary structure, monomer.

Its subcellular location is the cytoplasm. It catalyses the reaction tRNA(Arg) + L-arginine + ATP = L-arginyl-tRNA(Arg) + AMP + diphosphate. The protein is Arginine--tRNA ligase of Hahella chejuensis (strain KCTC 2396).